A 961-amino-acid chain; its full sequence is Glycine dehydrogenase (decarboxylating) (961 aa).

K709 is subject to N6-(pyridoxal phosphate)lysine.

The protein belongs to the GcvP family. As to quaternary structure, the glycine cleavage system is composed of four proteins: P, T, L and H. Requires pyridoxal 5'-phosphate as cofactor.

The catalysed reaction is N(6)-[(R)-lipoyl]-L-lysyl-[glycine-cleavage complex H protein] + glycine + H(+) = N(6)-[(R)-S(8)-aminomethyldihydrolipoyl]-L-lysyl-[glycine-cleavage complex H protein] + CO2. Functionally, the glycine cleavage system catalyzes the degradation of glycine. The P protein binds the alpha-amino group of glycine through its pyridoxal phosphate cofactor; CO(2) is released and the remaining methylamine moiety is then transferred to the lipoamide cofactor of the H protein. This chain is Glycine dehydrogenase (decarboxylating), found in Teredinibacter turnerae (strain ATCC 39867 / T7901).